A 468-amino-acid polypeptide reads, in one-letter code: Glutamate--tRNA ligase (468 aa).

Positions 8 to 18 (PSPTGFLHVGG) match the 'HIGH' region motif. Positions 97, 99, 124, and 126 each coordinate Zn(2+). The short motif at 236–240 (KLSKR) is the 'KMSKS' region element. Residue lysine 239 coordinates ATP.

It belongs to the class-I aminoacyl-tRNA synthetase family. Glutamate--tRNA ligase type 1 subfamily. In terms of assembly, monomer. It depends on Zn(2+) as a cofactor.

The protein localises to the cytoplasm. The catalysed reaction is tRNA(Glu) + L-glutamate + ATP = L-glutamyl-tRNA(Glu) + AMP + diphosphate. Functionally, catalyzes the attachment of glutamate to tRNA(Glu) in a two-step reaction: glutamate is first activated by ATP to form Glu-AMP and then transferred to the acceptor end of tRNA(Glu). This is Glutamate--tRNA ligase from Francisella tularensis subsp. novicida (strain U112).